Consider the following 1290-residue polypeptide: Period circadian protein homolog 1 (1290 aa).

Residues Met1–Thr134 are disordered. Positions Met1–Pro151 are interaction with BTRC. Residues Val25–Gly38 show a composition bias toward pro residues. 2 stretches are compositionally biased toward low complexity: residues Asn48–Ser57 and Gly64–Glu115. The segment covering Gln116 to Ala132 has biased composition (polar residues). Thr121 is subject to Phosphothreonine; by CSNK1E. Phosphoserine; by CSNK1E is present on residues Ser122 and Ser126. The Nuclear export signal 1 motif lies at Leu138 to Leu147. 2 consecutive PAS domains span residues Ile208–Leu275 and Tyr348–Gln414. Residues His422–Pro465 enclose the PAC domain. The Nuclear export signal 2 motif lies at Leu489 to Leu498. 2 disordered regions span residues Gly508–Val544 and Thr646–Val698. 2 stretches are compositionally biased toward low complexity: residues Ser517 to Gly533 and Ala652 to Ala662. Positions Glu596 to Ser815 are required for phosphorylation by CSNK1E. A phosphoserine mark is found at Ser661, Ser663, and Ser704. Disordered regions lie at residues Gly749 to Ala772, Arg805 to Thr874, and Ala938 to Arg977. Pro residues predominate over residues Ala751–Ala769. Ser815 carries the post-translational modification Phosphoserine. The Nuclear localization signal motif lies at Ala827–Arg843. Over residues Ser830–Asn847 the composition is skewed to basic residues. A compositionally biased stretch (pro residues) spans Ser860–Thr874. Over residues Ala950–Leu961 the composition is skewed to low complexity. Phosphoserine is present on residues Ser979 and Ser980. The short motif at Leu982–Leu989 is the Nuclear export signal 3 element. The interval Glu996 to Ser1037 is disordered. The LXXLL signature appears at Leu1043–Leu1047. The segment covering Ser1051 to Ser1062 has biased composition (low complexity). Disordered stretches follow at residues Ser1051–Phe1098 and Ser1207–Ser1290. Positions Leu1063 to Glu1077 are enriched in gly residues. A compositionally biased stretch (low complexity) spans Gly1078–Ser1095. Positions Ser1149–Ser1290 are CRY binding domain. Residues Gly1236–Gly1248 are compositionally biased toward gly residues.

Homodimer. Component of the circadian core oscillator, which includes the CRY proteins, CLOCK or NPAS2, BMAL1 or BMAL2, CSNK1D and/or CSNK1E, TIMELESS, and the PER proteins. Interacts directly with TIMELESS, PER2, PER3, CRY1 and CRY2. Interacts with BMAL1 and CLOCK. Interacts with GPRASP1. Interacts (phosphorylated) with BTRC and FBXW11; the interactions trigger proteasomal degradation. Interacts with NONO, WDR5 and SFPQ. Interacts with USP2. Interacts with HNF4A. Post-translationally, phosphorylated on serine residues by CSNK1D, CSNK1E and probably also by CSNK1G2. Phosphorylation by CSNK1D or CSNK1E promotes nuclear location of PER proteins as well as ubiquitination and subsequent degradation. May be dephosphorylated by PP1. Ubiquitinated; requires phosphorylation by CSNK1E and interaction with BTRC and FBXW11. Deubiquitinated by USP2. Widely expressed. Expressed in hair follicles (at protein level). Found in heart, brain, placenta, lung, liver, skeletal muscle, pancreas, kidney, spleen, thymus, prostate, testis, ovary and small intestine. Highest level in skeletal muscle.

It is found in the nucleus. Its subcellular location is the cytoplasm. Its function is as follows. Transcriptional repressor which forms a core component of the circadian clock. The circadian clock, an internal time-keeping system, regulates various physiological processes through the generation of approximately 24 hour circadian rhythms in gene expression, which are translated into rhythms in metabolism and behavior. It is derived from the Latin roots 'circa' (about) and 'diem' (day) and acts as an important regulator of a wide array of physiological functions including metabolism, sleep, body temperature, blood pressure, endocrine, immune, cardiovascular, and renal function. Consists of two major components: the central clock, residing in the suprachiasmatic nucleus (SCN) of the brain, and the peripheral clocks that are present in nearly every tissue and organ system. Both the central and peripheral clocks can be reset by environmental cues, also known as Zeitgebers (German for 'timegivers'). The predominant Zeitgeber for the central clock is light, which is sensed by retina and signals directly to the SCN. The central clock entrains the peripheral clocks through neuronal and hormonal signals, body temperature and feeding-related cues, aligning all clocks with the external light/dark cycle. Circadian rhythms allow an organism to achieve temporal homeostasis with its environment at the molecular level by regulating gene expression to create a peak of protein expression once every 24 hours to control when a particular physiological process is most active with respect to the solar day. Transcription and translation of core clock components (CLOCK, NPAS2, BMAL1, BMAL2, PER1, PER2, PER3, CRY1 and CRY2) plays a critical role in rhythm generation, whereas delays imposed by post-translational modifications (PTMs) are important for determining the period (tau) of the rhythms (tau refers to the period of a rhythm and is the length, in time, of one complete cycle). A diurnal rhythm is synchronized with the day/night cycle, while the ultradian and infradian rhythms have a period shorter and longer than 24 hours, respectively. Disruptions in the circadian rhythms contribute to the pathology of cardiovascular diseases, cancer, metabolic syndromes and aging. A transcription/translation feedback loop (TTFL) forms the core of the molecular circadian clock mechanism. Transcription factors, CLOCK or NPAS2 and BMAL1 or BMAL2, form the positive limb of the feedback loop, act in the form of a heterodimer and activate the transcription of core clock genes and clock-controlled genes (involved in key metabolic processes), harboring E-box elements (5'-CACGTG-3') within their promoters. The core clock genes: PER1/2/3 and CRY1/2 which are transcriptional repressors form the negative limb of the feedback loop and interact with the CLOCK|NPAS2-BMAL1|BMAL2 heterodimer inhibiting its activity and thereby negatively regulating their own expression. This heterodimer also activates nuclear receptors NR1D1/2 and RORA/B/G, which form a second feedback loop and which activate and repress BMAL1 transcription, respectively. Regulates circadian target genes expression at post-transcriptional levels, but may not be required for the repression at transcriptional level. Controls PER2 protein decay. Represses CRY2 preventing its repression on CLOCK/BMAL1 target genes such as FXYD5 and SCNN1A in kidney and PPARA in liver. Besides its involvement in the maintenance of the circadian clock, has an important function in the regulation of several processes. Participates in the repression of glucocorticoid receptor NR3C1/GR-induced transcriptional activity by reducing the association of NR3C1/GR to glucocorticoid response elements (GREs) by BMAL1:CLOCK. Plays a role in the modulation of the neuroinflammatory state via the regulation of inflammatory mediators release, such as CCL2 and IL6. In spinal astrocytes, negatively regulates the MAPK14/p38 and MAPK8/JNK MAPK cascades as well as the subsequent activation of NFkappaB. Coordinately regulates the expression of multiple genes that are involved in the regulation of renal sodium reabsorption. Can act as gene expression activator in a gene and tissue specific manner, in kidney enhances WNK1 and SLC12A3 expression in collaboration with CLOCK. Modulates hair follicle cycling. Represses the CLOCK-BMAL1 induced transcription of BHLHE40/DEC1. In Homo sapiens (Human), this protein is Period circadian protein homolog 1 (PER1).